The primary structure comprises 419 residues: Diaminopimelate decarboxylase (419 aa).

Lysine 56 carries the N6-(pyridoxal phosphate)lysine modification. Pyridoxal 5'-phosphate-binding positions include glycine 234 and 274-277 (EPGR). 3 residues coordinate substrate: arginine 277, arginine 312, and tyrosine 316. Catalysis depends on cysteine 343, which acts as the Proton donor. Positions 344 and 372 each coordinate substrate. Residue tyrosine 372 coordinates pyridoxal 5'-phosphate.

This sequence belongs to the Orn/Lys/Arg decarboxylase class-II family. LysA subfamily. As to quaternary structure, homodimer. It depends on pyridoxal 5'-phosphate as a cofactor.

It carries out the reaction meso-2,6-diaminopimelate + H(+) = L-lysine + CO2. The protein operates within amino-acid biosynthesis; L-lysine biosynthesis via DAP pathway; L-lysine from DL-2,6-diaminopimelate: step 1/1. In terms of biological role, specifically catalyzes the decarboxylation of meso-diaminopimelate (meso-DAP) to L-lysine. This is Diaminopimelate decarboxylase from Archaeoglobus fulgidus (strain ATCC 49558 / DSM 4304 / JCM 9628 / NBRC 100126 / VC-16).